A 285-amino-acid polypeptide reads, in one-letter code: Hsp90 co-chaperone Cdc37-like 1 (285 aa).

Positions 34–54 (LHNSESMDQEQAMAQAELSEL) are disordered. A coiled-coil region spans residues 35 to 73 (HNSESMDQEQAMAQAELSELQRSEEEWRRKEAALSQGEN).

This sequence belongs to the CDC37 family. In terms of assembly, forms complexes with Hsp70 and Hsp90.

Its subcellular location is the cytoplasm. Functionally, co-chaperone that binds to numerous proteins and promotes their interaction with Hsp70 and Hsp90. The chain is Hsp90 co-chaperone Cdc37-like 1 (cdc37l1) from Xenopus tropicalis (Western clawed frog).